A 465-amino-acid chain; its full sequence is tRNA modification GTPase MnmE (465 aa).

(6S)-5-formyl-5,6,7,8-tetrahydrofolate is bound by residues Arg-23, Glu-81, and Lys-120. In terms of domain architecture, TrmE-type G spans 217-389; sequence GVHVVLAGRP…LIASLCDKVG (173 aa). Asn-227 is a K(+) binding site. GTP contacts are provided by residues 227-232, 246-252, and 271-274; these read NAGKSS, TDVAGTT, and DTAG. Mg(2+) is bound at residue Ser-231. Residues Thr-246, Val-248, and Thr-251 each coordinate K(+). Residue Thr-252 coordinates Mg(2+). Lys-465 contributes to the (6S)-5-formyl-5,6,7,8-tetrahydrofolate binding site.

This sequence belongs to the TRAFAC class TrmE-Era-EngA-EngB-Septin-like GTPase superfamily. TrmE GTPase family. In terms of assembly, homodimer. Heterotetramer of two MnmE and two MnmG subunits. It depends on K(+) as a cofactor.

The protein localises to the cytoplasm. Functionally, exhibits a very high intrinsic GTPase hydrolysis rate. Involved in the addition of a carboxymethylaminomethyl (cmnm) group at the wobble position (U34) of certain tRNAs, forming tRNA-cmnm(5)s(2)U34. This chain is tRNA modification GTPase MnmE, found in Psychrobacter sp. (strain PRwf-1).